Consider the following 108-residue polypeptide: T-cell acute lymphocytic leukemia protein 2 (108 aa).

Residues 2–54 (TRKIFTNTRERWRQQNVNSAFAKLRKLIPTHPPDKKLSKNETLRLAMRYINFL) enclose the bHLH domain. Residues 89-108 (DRTLLENYQVPSPGPSHHIP) are disordered.

This chain is T-cell acute lymphocytic leukemia protein 2 (TAL2), found in Homo sapiens (Human).